We begin with the raw amino-acid sequence, 421 residues long: NADH-quinone oxidoreductase subunit F (421 aa).

Residue Gly-54 to Gly-63 participates in NAD(+) binding. Gly-166–Ser-213 provides a ligand contact to FMN. 4 residues coordinate [4Fe-4S] cluster: Cys-344, Cys-347, Cys-350, and Cys-390.

Belongs to the complex I 51 kDa subunit family. It depends on FMN as a cofactor. The cofactor is [4Fe-4S] cluster.

It catalyses the reaction a quinone + NADH + 5 H(+)(in) = a quinol + NAD(+) + 4 H(+)(out). Its function is as follows. NDH-1 shuttles electrons from NADH, via FMN and iron-sulfur (Fe-S) centers, to quinones in the respiratory chain. Couples the redox reaction to proton translocation (for every two electrons transferred, four hydrogen ions are translocated across the cytoplasmic membrane), and thus conserves the redox energy in a proton gradient. The protein is NADH-quinone oxidoreductase subunit F (nuoF) of Rickettsia typhi (strain ATCC VR-144 / Wilmington).